Here is a 264-residue protein sequence, read N- to C-terminus: 3-methyl-2-oxobutanoate hydroxymethyltransferase (264 aa).

Mg(2+) contacts are provided by Asp45 and Asp84. 3-methyl-2-oxobutanoate is bound by residues 45 to 46 (DS), Asp84, and Lys112. Glu114 lines the Mg(2+) pocket. Glu181 acts as the Proton acceptor in catalysis.

The protein belongs to the PanB family. As to quaternary structure, homodecamer; pentamer of dimers. Mg(2+) serves as cofactor.

It localises to the cytoplasm. It catalyses the reaction 3-methyl-2-oxobutanoate + (6R)-5,10-methylene-5,6,7,8-tetrahydrofolate + H2O = 2-dehydropantoate + (6S)-5,6,7,8-tetrahydrofolate. The protein operates within cofactor biosynthesis; (R)-pantothenate biosynthesis; (R)-pantoate from 3-methyl-2-oxobutanoate: step 1/2. Catalyzes the reversible reaction in which hydroxymethyl group from 5,10-methylenetetrahydrofolate is transferred onto alpha-ketoisovalerate to form ketopantoate. The polypeptide is 3-methyl-2-oxobutanoate hydroxymethyltransferase (Aeromonas hydrophila subsp. hydrophila (strain ATCC 7966 / DSM 30187 / BCRC 13018 / CCUG 14551 / JCM 1027 / KCTC 2358 / NCIMB 9240 / NCTC 8049)).